We begin with the raw amino-acid sequence, 274 residues long: Large ribosomal subunit protein uL2 (274 aa).

Disordered regions lie at residues Ala-28–Gly-55 and Val-224–Lys-274. Basic and acidic residues predominate over residues Lys-263–Lys-274.

It belongs to the universal ribosomal protein uL2 family. In terms of assembly, part of the 50S ribosomal subunit. Forms a bridge to the 30S subunit in the 70S ribosome.

Its function is as follows. One of the primary rRNA binding proteins. Required for association of the 30S and 50S subunits to form the 70S ribosome, for tRNA binding and peptide bond formation. It has been suggested to have peptidyltransferase activity; this is somewhat controversial. Makes several contacts with the 16S rRNA in the 70S ribosome. This is Large ribosomal subunit protein uL2 from Pseudomonas fluorescens (strain ATCC BAA-477 / NRRL B-23932 / Pf-5).